The primary structure comprises 301 residues: Acetylglutamate kinase (301 aa).

Substrate-binding positions include 71-72 (GG), Arg-93, and Asn-198.

Belongs to the acetylglutamate kinase family. ArgB subfamily.

Its subcellular location is the cytoplasm. The enzyme catalyses N-acetyl-L-glutamate + ATP = N-acetyl-L-glutamyl 5-phosphate + ADP. Its pathway is amino-acid biosynthesis; L-arginine biosynthesis; N(2)-acetyl-L-ornithine from L-glutamate: step 2/4. Its function is as follows. Catalyzes the ATP-dependent phosphorylation of N-acetyl-L-glutamate. This Rhizorhabdus wittichii (strain DSM 6014 / CCUG 31198 / JCM 15750 / NBRC 105917 / EY 4224 / RW1) (Sphingomonas wittichii) protein is Acetylglutamate kinase.